The sequence spans 361 residues: Chorismate synthase (361 aa).

Positions 48 and 54 each coordinate NADP(+). Residues 125–127 (RSS), 238–239 (NA), Gly-278, 293–297 (KPTSS), and Arg-319 contribute to the FMN site.

Belongs to the chorismate synthase family. As to quaternary structure, homotetramer. The cofactor is FMNH2.

It carries out the reaction 5-O-(1-carboxyvinyl)-3-phosphoshikimate = chorismate + phosphate. Its pathway is metabolic intermediate biosynthesis; chorismate biosynthesis; chorismate from D-erythrose 4-phosphate and phosphoenolpyruvate: step 7/7. Catalyzes the anti-1,4-elimination of the C-3 phosphate and the C-6 proR hydrogen from 5-enolpyruvylshikimate-3-phosphate (EPSP) to yield chorismate, which is the branch point compound that serves as the starting substrate for the three terminal pathways of aromatic amino acid biosynthesis. This reaction introduces a second double bond into the aromatic ring system. This chain is Chorismate synthase, found in Cronobacter sakazakii (strain ATCC BAA-894) (Enterobacter sakazakii).